We begin with the raw amino-acid sequence, 179 residues long: Hypoxanthine-guanine phosphoribosyltransferase (179 aa).

Residues lysine 42 and glycine 43 each contribute to the diphosphate site. Residues glutamate 98 and aspartate 99 each contribute to the Mg(2+) site. Glutamate 102 functions as the Proton acceptor in the catalytic mechanism. GMP-binding positions include lysine 130, 151–152 (FV), and aspartate 158. A diphosphate-binding site is contributed by arginine 164.

Belongs to the purine/pyrimidine phosphoribosyltransferase family. The cofactor is Mg(2+).

Its subcellular location is the cytoplasm. The catalysed reaction is IMP + diphosphate = hypoxanthine + 5-phospho-alpha-D-ribose 1-diphosphate. It catalyses the reaction GMP + diphosphate = guanine + 5-phospho-alpha-D-ribose 1-diphosphate. It functions in the pathway purine metabolism; IMP biosynthesis via salvage pathway; IMP from hypoxanthine: step 1/1. The protein operates within purine metabolism; GMP biosynthesis via salvage pathway; GMP from guanine: step 1/1. Purine salvage pathway enzyme that catalyzes the transfer of the ribosyl-5-phosphate group from 5-phospho-alpha-D-ribose 1-diphosphate (PRPP) to the N9 position of the 6-oxopurines hypoxanthine and guanine to form the corresponding ribonucleotides IMP (inosine 5'-monophosphate) and GMP (guanosine 5'-monophosphate), with the release of PPi. In Staphylococcus epidermidis (strain ATCC 35984 / DSM 28319 / BCRC 17069 / CCUG 31568 / BM 3577 / RP62A), this protein is Hypoxanthine-guanine phosphoribosyltransferase (hpt).